A 275-amino-acid chain; its full sequence is Acetyl-coenzyme A carboxylase carboxyl transferase subunit beta (275 aa).

The region spanning 21–275 (GLWIKCQCGA…IKIIGMHQAG (255 aa)) is the CoA carboxyltransferase N-terminal domain. Zn(2+) contacts are provided by Cys-26, Cys-28, Cys-44, and Cys-47. A C4-type zinc finger spans residues 26-47 (CQCGAILFAKDLERNLKVCQKC).

Belongs to the AccD/PCCB family. As to quaternary structure, acetyl-CoA carboxylase is a heterohexamer composed of biotin carboxyl carrier protein (AccB), biotin carboxylase (AccC) and two subunits each of ACCase subunit alpha (AccA) and ACCase subunit beta (AccD). The cofactor is Zn(2+).

It localises to the cytoplasm. The enzyme catalyses N(6)-carboxybiotinyl-L-lysyl-[protein] + acetyl-CoA = N(6)-biotinyl-L-lysyl-[protein] + malonyl-CoA. Its pathway is lipid metabolism; malonyl-CoA biosynthesis; malonyl-CoA from acetyl-CoA: step 1/1. Functionally, component of the acetyl coenzyme A carboxylase (ACC) complex. Biotin carboxylase (BC) catalyzes the carboxylation of biotin on its carrier protein (BCCP) and then the CO(2) group is transferred by the transcarboxylase to acetyl-CoA to form malonyl-CoA. In Desulforudis audaxviator (strain MP104C), this protein is Acetyl-coenzyme A carboxylase carboxyl transferase subunit beta.